Consider the following 567-residue polypeptide: Urease subunit alpha (567 aa).

A Urease domain is found at 129 to 567 (GGIDTHIHFI…LPMAQRYFLF (439 aa)). Ni(2+) is bound by residues His-134, His-136, and Lys-217. Lys-217 is subject to N6-carboxylysine. Residue His-219 participates in substrate binding. Ni(2+) is bound by residues His-246 and His-272. His-320 (proton donor) is an active-site residue. Asp-360 contacts Ni(2+).

Belongs to the metallo-dependent hydrolases superfamily. Urease alpha subunit family. In terms of assembly, probable heterotrimer of UreA (gamma), UreB (beta) and UreC (alpha) subunits. Three heterotrimers associate to form the active enzyme. The trimeric urease interacts with an accessory complex composed of UreD, UreF and UreG, which is required for the assembly of the nickel containing metallocenter of UreC. The UreE protein may also play a direct role in nickel transfer to the urease apoprotein. The cofactor is Ni cation. Carboxylation allows a single lysine to coordinate two nickel ions.

Its subcellular location is the cytoplasm. It carries out the reaction urea + 2 H2O + H(+) = hydrogencarbonate + 2 NH4(+). It participates in nitrogen metabolism; urea degradation; CO(2) and NH(3) from urea (urease route): step 1/1. The chain is Urease subunit alpha from Proteus mirabilis (strain HI4320).